Here is a 261-residue protein sequence, read N- to C-terminus: Cytochrome c oxidase subunit 3 (261 aa).

At 1 to 15 (MTHQTHSYHMVNPSP) the chain is on the mitochondrial matrix side. The helical transmembrane segment at 16 to 34 (WPLTGALSALLMTSGLIMW) threads the bilayer. The Mitochondrial intermembrane portion of the chain corresponds to 35–40 (FHFNSM). A helical membrane pass occupies residues 41-66 (ILLTLGLSTNILTMYQWWRDIIREST). Residues 67 to 72 (FQGHHT) lie on the Mitochondrial matrix side of the membrane. The helical transmembrane segment at 73-105 (PTVQKGLRYGMILFIVSEVLFFTGFFWAFYHSS) threads the bilayer. The Mitochondrial intermembrane portion of the chain corresponds to 106–128 (LAPTPELGGCWPPTGIHPLNPLE). Residues 129–152 (VPLLNTSVLLASGVSITWAHHSLM) form a helical membrane-spanning segment. The Mitochondrial matrix portion of the chain corresponds to 153–155 (EGN). Residues 156–183 (RKHMLQALFITIALGLYFTLLQASEYYE) traverse the membrane as a helical segment. Topologically, residues 184–190 (APFTISD) are mitochondrial intermembrane. A helical transmembrane segment spans residues 191-223 (GIYGSTFFVATGFHGLHVIIGSTFLIVCFLRQV). Over 224–232 (KFHFTSNHH) the chain is Mitochondrial matrix. The chain crosses the membrane as a helical span at residues 233-256 (FGFERAAWYWHFVDVVWLFLYVSI). Residues 257–261 (YWWGS) are Mitochondrial intermembrane-facing.

This sequence belongs to the cytochrome c oxidase subunit 3 family. In terms of assembly, component of the cytochrome c oxidase (complex IV, CIV), a multisubunit enzyme composed of 14 subunits. The complex is composed of a catalytic core of 3 subunits MT-CO1, MT-CO2 and MT-CO3, encoded in the mitochondrial DNA, and 11 supernumerary subunits COX4I, COX5A, COX5B, COX6A, COX6B, COX6C, COX7A, COX7B, COX7C, COX8 and NDUFA4, which are encoded in the nuclear genome. The complex exists as a monomer or a dimer and forms supercomplexes (SCs) in the inner mitochondrial membrane with NADH-ubiquinone oxidoreductase (complex I, CI) and ubiquinol-cytochrome c oxidoreductase (cytochrome b-c1 complex, complex III, CIII), resulting in different assemblies (supercomplex SCI(1)III(2)IV(1) and megacomplex MCI(2)III(2)IV(2)).

The protein resides in the mitochondrion inner membrane. It catalyses the reaction 4 Fe(II)-[cytochrome c] + O2 + 8 H(+)(in) = 4 Fe(III)-[cytochrome c] + 2 H2O + 4 H(+)(out). Its function is as follows. Component of the cytochrome c oxidase, the last enzyme in the mitochondrial electron transport chain which drives oxidative phosphorylation. The respiratory chain contains 3 multisubunit complexes succinate dehydrogenase (complex II, CII), ubiquinol-cytochrome c oxidoreductase (cytochrome b-c1 complex, complex III, CIII) and cytochrome c oxidase (complex IV, CIV), that cooperate to transfer electrons derived from NADH and succinate to molecular oxygen, creating an electrochemical gradient over the inner membrane that drives transmembrane transport and the ATP synthase. Cytochrome c oxidase is the component of the respiratory chain that catalyzes the reduction of oxygen to water. Electrons originating from reduced cytochrome c in the intermembrane space (IMS) are transferred via the dinuclear copper A center (CU(A)) of subunit 2 and heme A of subunit 1 to the active site in subunit 1, a binuclear center (BNC) formed by heme A3 and copper B (CU(B)). The BNC reduces molecular oxygen to 2 water molecules using 4 electrons from cytochrome c in the IMS and 4 protons from the mitochondrial matrix. The polypeptide is Cytochrome c oxidase subunit 3 (MT-CO3) (Balaenoptera musculus (Blue whale)).